We begin with the raw amino-acid sequence, 153 residues long: Ubiquitin-conjugating enzyme E2-18 kDa (153 aa).

Positions 2 to 149 (AATRRLTREL…AEEFTKKNAE (148 aa)) constitute a UBC core domain. Cys-86 functions as the Glycyl thioester intermediate in the catalytic mechanism.

The protein belongs to the ubiquitin-conjugating enzyme family.

The catalysed reaction is S-ubiquitinyl-[E1 ubiquitin-activating enzyme]-L-cysteine + [E2 ubiquitin-conjugating enzyme]-L-cysteine = [E1 ubiquitin-activating enzyme]-L-cysteine + S-ubiquitinyl-[E2 ubiquitin-conjugating enzyme]-L-cysteine.. It functions in the pathway protein modification; protein ubiquitination. Its function is as follows. Catalyzes the covalent attachment of ubiquitin to other proteins. The sequence is that of Ubiquitin-conjugating enzyme E2-18 kDa (Ubc84D) from Drosophila melanogaster (Fruit fly).